Reading from the N-terminus, the 171-residue chain is Large ribosomal subunit protein bL9 (171 aa).

Belongs to the bacterial ribosomal protein bL9 family.

Functionally, binds to the 23S rRNA. This chain is Large ribosomal subunit protein bL9, found in Rickettsia canadensis (strain McKiel).